The primary structure comprises 437 residues: Amino-acid acetyltransferase (437 aa).

The N-acetyltransferase domain maps to 289-437; the sequence is ECIRLATSFD…SKVLMLALDN (149 aa).

Belongs to the acetyltransferase family. ArgA subfamily.

It is found in the cytoplasm. It carries out the reaction L-glutamate + acetyl-CoA = N-acetyl-L-glutamate + CoA + H(+). It functions in the pathway amino-acid biosynthesis; L-arginine biosynthesis; N(2)-acetyl-L-ornithine from L-glutamate: step 1/4. In Haemophilus ducreyi (strain 35000HP / ATCC 700724), this protein is Amino-acid acetyltransferase.